Here is a 66-residue protein sequence, read N- to C-terminus: Large ribosomal subunit protein bL28 (66 aa).

Belongs to the bacterial ribosomal protein bL28 family.

The sequence is that of Large ribosomal subunit protein bL28 from Oenococcus oeni (strain ATCC BAA-331 / PSU-1).